The sequence spans 232 residues: Ribonuclease 3 (232 aa).

An RNase III domain is found at 5–134 (NDAISKIIDY…LIGAIYIDGG (130 aa)). Mg(2+) is bound at residue Glu-47. Residue Asp-51 is part of the active site. Residues Asn-120 and Glu-123 each contribute to the Mg(2+) site. Glu-123 is an active-site residue. The DRBM domain occupies 159 to 228 (DPKTSLQEWT…AELMLEKIGK (70 aa)).

This sequence belongs to the ribonuclease III family. Homodimer. Mg(2+) is required as a cofactor.

It is found in the cytoplasm. It catalyses the reaction Endonucleolytic cleavage to 5'-phosphomonoester.. Its function is as follows. Digests double-stranded RNA. Involved in the processing of primary rRNA transcript to yield the immediate precursors to the large and small rRNAs (23S and 16S). Processes some mRNAs, and tRNAs when they are encoded in the rRNA operon. Processes pre-crRNA and tracrRNA of type II CRISPR loci if present in the organism. The chain is Ribonuclease 3 from Wolbachia pipientis wMel.